We begin with the raw amino-acid sequence, 500 residues long: Probable malate:quinone oxidoreductase (500 aa).

Belongs to the MQO family. It depends on FAD as a cofactor.

The enzyme catalyses (S)-malate + a quinone = a quinol + oxaloacetate. Its pathway is carbohydrate metabolism; tricarboxylic acid cycle; oxaloacetate from (S)-malate (quinone route): step 1/1. This is Probable malate:quinone oxidoreductase from Bacillus cereus (strain G9842).